The sequence spans 180 residues: NAD(P)H-quinone oxidoreductase subunit I, chloroplastic (180 aa).

4Fe-4S ferredoxin-type domains are found at residues G55 to R84 and L95 to E124. [4Fe-4S] cluster contacts are provided by C64, C67, C70, C74, C104, C107, C110, and C114.

Belongs to the complex I 23 kDa subunit family. In terms of assembly, NDH is composed of at least 16 different subunits, 5 of which are encoded in the nucleus. It depends on [4Fe-4S] cluster as a cofactor.

Its subcellular location is the plastid. It localises to the chloroplast thylakoid membrane. It catalyses the reaction a plastoquinone + NADH + (n+1) H(+)(in) = a plastoquinol + NAD(+) + n H(+)(out). It carries out the reaction a plastoquinone + NADPH + (n+1) H(+)(in) = a plastoquinol + NADP(+) + n H(+)(out). In terms of biological role, NDH shuttles electrons from NAD(P)H:plastoquinone, via FMN and iron-sulfur (Fe-S) centers, to quinones in the photosynthetic chain and possibly in a chloroplast respiratory chain. The immediate electron acceptor for the enzyme in this species is believed to be plastoquinone. Couples the redox reaction to proton translocation, and thus conserves the redox energy in a proton gradient. The protein is NAD(P)H-quinone oxidoreductase subunit I, chloroplastic of Dioscorea elephantipes (Elephant's foot yam).